The following is a 134-amino-acid chain: MKFAIVLIACFAASVLAQEHKPKKDDFRNEFDHLLIEQANHAIEKGEHQLLYLQHQLDELNENKSKELQEKIIRELDVVCAMIEGAQGALERELKRTDLNILERFNYEEAQTLSKILLKDLKETEQKVKDIQTQ.

The first 17 residues, 1 to 17 (MKFAIVLIACFAASVLA), serve as a signal peptide directing secretion. A coiled-coil region spans residues 18 to 113 (QEHKPKKDDF…RFNYEEAQTL (96 aa)).

The protein belongs to the mite group 5 allergen family. As to quaternary structure, may exist as homodimer and homotrimer. As to expression, midgut and hindgut contents as well as fecal pellets (at protein level).

This chain is Mite allergen Blo t 5 (BLOT5), found in Blomia tropicalis (Mite).